The primary structure comprises 380 residues: Mitogen-activated protein kinase 3 (380 aa).

The residue at position 2 (Ala2) is an N-acetylalanine. The 289-residue stretch at 43–331 (YTQLQYIGEG…VEEALAHPYL (289 aa)) folds into the Protein kinase domain. ATP-binding positions include 49–57 (IGEGAYGMV) and Lys72. Asp167 functions as the Proton acceptor in the catalytic mechanism. Thr199 is subject to Phosphothreonine. Thr203 is modified (phosphothreonine; by MAP2K1 and MAP2K2). A TXY motif is present at residues 203-205 (TEY). The residue at position 205 (Tyr205) is a Phosphotyrosine; by MAP2K1 and MAP2K2. Thr208 carries the phosphothreonine; by autocatalysis modification.

This sequence belongs to the protein kinase superfamily. CMGC Ser/Thr protein kinase family. MAP kinase subfamily. Binds both upstream activators and downstream substrates in multimolecular complexes. Found in a complex with at least BRAF, HRAS, MAP2K1/MEK1, MAPK3 and RGS14. Interacts with TPR. Interacts with ADAM15, ARRB2, CANX, DAPK1 (via death domain), HSF4, IER3, MAP2K1/MEK1, NISCH, and SGK1. Interacts with MORG1. Interacts with PEA15. Interacts with isoform 1 of MKNK2 and this binding prevents from dephosphorylation and inactivation. Interacts with CDKN2AIP. Interacts with HSF1 (via D domain and preferentially with hyperphosphorylated form); this interaction occurs upon heat shock. Interacts with CAVIN4. Interacts with GIT1; this interaction is necessary for MAPK3 localization to focal adhesions. Interacts with ZNF263. Interacts with EBF4. The cofactor is Mg(2+). Post-translationally, dually phosphorylated on Thr-203 and Tyr-205, which activates the enzyme. Ligand-activated ALK induces tyrosine phosphorylation. Dephosphorylated by PTPRJ at Tyr-205. Autophosphorylated on threonine and tyrosine residues in vitro. Phosphorylated upon FLT3 and KIT signaling. Ubiquitinated by TRIM15 via 'Lys-63'-linked ubiquitination; leading to activation. Deubiquitinated by CYLD.

The protein resides in the cytoplasm. It is found in the nucleus. It localises to the membrane. The protein localises to the caveola. Its subcellular location is the cell junction. The protein resides in the focal adhesion. It catalyses the reaction L-seryl-[protein] + ATP = O-phospho-L-seryl-[protein] + ADP + H(+). The enzyme catalyses L-threonyl-[protein] + ATP = O-phospho-L-threonyl-[protein] + ADP + H(+). Its activity is regulated as follows. Phosphorylated by MAP2K1/MEK1 and MAP2K2/MEK2 on Thr-203 and Tyr-205 in response to external stimuli like insulin or NGF. Both phosphorylations are required for activity. This phosphorylation causes dramatic conformational changes, which enable full activation and interaction of MAPK1/ERK2 with its substrates. Dephosphorylated and inactivated by DUSP3, DUSP6 and DUSP9. Its function is as follows. Serine/threonine kinase which acts as an essential component of the MAP kinase signal transduction pathway. MAPK1/ERK2 and MAPK3/ERK1 are the 2 MAPKs which play an important role in the MAPK/ERK cascade. They participate also in a signaling cascade initiated by activated KIT and KITLG/SCF. Depending on the cellular context, the MAPK/ERK cascade mediates diverse biological functions such as cell growth, adhesion, survival and differentiation through the regulation of transcription, translation, cytoskeletal rearrangements. The MAPK/ERK cascade also plays a role in initiation and regulation of meiosis, mitosis, and postmitotic functions in differentiated cells by phosphorylating a number of transcription factors. About 160 substrates have already been discovered for ERKs. Many of these substrates are localized in the nucleus, and seem to participate in the regulation of transcription upon stimulation. However, other substrates are found in the cytosol as well as in other cellular organelles, and those are responsible for processes such as translation, mitosis and apoptosis. Moreover, the MAPK/ERK cascade is also involved in the regulation of the endosomal dynamics, including lysosome processing and endosome cycling through the perinuclear recycling compartment (PNRC); as well as in the fragmentation of the Golgi apparatus during mitosis. The substrates include transcription factors (such as ATF2, BCL6, ELK1, ERF, FOS, HSF4 or SPZ1), cytoskeletal elements (such as CANX, CTTN, GJA1, MAP2, MAPT, PXN, SORBS3 or STMN1), regulators of apoptosis (such as BAD, BTG2, CASP9, DAPK1, IER3, MCL1 or PPARG), regulators of translation (such as EIF4EBP1) and a variety of other signaling-related molecules (like ARHGEF2, DEPTOR, FRS2 or GRB10). Protein kinases (such as RAF1, RPS6KA1/RSK1, RPS6KA3/RSK2, RPS6KA2/RSK3, RPS6KA6/RSK4, SYK, MKNK1/MNK1, MKNK2/MNK2, RPS6KA5/MSK1, RPS6KA4/MSK2, MAPKAPK3 or MAPKAPK5) and phosphatases (such as DUSP1, DUSP4, DUSP6 or DUSP16) are other substrates which enable the propagation the MAPK/ERK signal to additional cytosolic and nuclear targets, thereby extending the specificity of the cascade. The sequence is that of Mitogen-activated protein kinase 3 (Mapk3) from Mus musculus (Mouse).